The chain runs to 471 residues: Heparan-sulfate 6-O-sulfotransferase 3 (471 aa).

Residues methionine 1–arginine 4 lie on the Cytoplasmic side of the membrane. Residues phenylalanine 5 to serine 27 form a helical; Signal-anchor for type II membrane protein membrane-spanning segment. The Lumenal portion of the chain corresponds to proline 28–tryptophan 471. The interval glutamate 39–arginine 122 is disordered. Over residues proline 41–proline 62 the composition is skewed to low complexity. Residues glutamine 70 to glycine 81 are compositionally biased toward pro residues. Over residues proline 88–alanine 114 the composition is skewed to acidic residues. 2 N-linked (GlcNAc...) asparagine glycosylation sites follow: asparagine 117 and asparagine 128. Histidine 152–threonine 160 lines the 3'-phosphoadenylyl sulfate pocket. Residues lysine 182–lysine 183, arginine 199, tryptophan 204, and histidine 209 contribute to the substrate site. The Proton acceptor role is filled by histidine 209. Asparagine 231 carries an N-linked (GlcNAc...) asparagine glycan. 3'-phosphoadenylyl sulfate-binding residues include arginine 245 and serine 253. Substrate-binding residues include histidine 257 and tryptophan 264. N-linked (GlcNAc...) asparagine glycosylation is found at asparagine 324 and asparagine 329. A 3'-phosphoadenylyl sulfate-binding site is contributed by threonine 377–phenylalanine 379. Asparagine 380 carries N-linked (GlcNAc...) asparagine glycosylation. 3'-phosphoadenylyl sulfate is bound at residue arginine 383–alanine 384. The tract at residues threonine 422–tryptophan 471 is disordered. Basic and acidic residues predominate over residues lysine 423 to glycine 454. The segment covering glutamate 462–tryptophan 471 has biased composition (polar residues).

Belongs to the sulfotransferase 6 family.

It localises to the membrane. It catalyses the reaction alpha-D-glucosaminyl-[heparan sulfate](n) + 3'-phosphoadenylyl sulfate = 6-sulfo-alpha-D-glucosaminyl-[heparan sulfate](n) + adenosine 3',5'-bisphosphate + H(+). Functionally, 6-O-sulfation enzyme which catalyzes the transfer of sulfate from 3'-phosphoadenosine 5'-phosphosulfate (PAPS) to position 6 of the N-sulfoglucosamine residue (GlcNS) of heparan sulfate. This Homo sapiens (Human) protein is Heparan-sulfate 6-O-sulfotransferase 3 (HS6ST3).